Consider the following 311-residue polypeptide: Putative methylthioribose-1-phosphate isomerase (311 aa).

Residues 46-48 (RGA), Arg-80, and Gln-174 each bind substrate. Asp-215 acts as the Proton donor in catalysis. Residue 224 to 225 (NK) coordinates substrate.

It belongs to the eIF-2B alpha/beta/delta subunits family. MtnA subfamily.

The enzyme catalyses 5-(methylsulfanyl)-alpha-D-ribose 1-phosphate = 5-(methylsulfanyl)-D-ribulose 1-phosphate. Catalyzes the interconversion of methylthioribose-1-phosphate (MTR-1-P) into methylthioribulose-1-phosphate (MTRu-1-P). The chain is Putative methylthioribose-1-phosphate isomerase from Methanothermobacter thermautotrophicus (strain ATCC 29096 / DSM 1053 / JCM 10044 / NBRC 100330 / Delta H) (Methanobacterium thermoautotrophicum).